We begin with the raw amino-acid sequence, 242 residues long: Probable 2-phosphosulfolactate phosphatase (242 aa).

This sequence belongs to the ComB family. Mg(2+) is required as a cofactor.

The enzyme catalyses (2R)-O-phospho-3-sulfolactate + H2O = (2R)-3-sulfolactate + phosphate. In Prochlorococcus marinus (strain NATL2A), this protein is Probable 2-phosphosulfolactate phosphatase.